We begin with the raw amino-acid sequence, 322 residues long: Phospho-N-acetylmuramoyl-pentapeptide-transferase (322 aa).

The next 10 membrane-spanning stretches (helical) occupy residues Ala-6–Ile-26, Thr-54–Trp-74, Val-82–Ile-102, Ile-122–Tyr-142, Phe-145–Gly-165, Leu-176–Phe-196, Asn-200–Phe-220, Ile-227–Met-247, Leu-255–Phe-275, and Val-302–Gly-322.

This sequence belongs to the glycosyltransferase 4 family. MraY subfamily. The cofactor is Mg(2+).

The protein resides in the cell membrane. It carries out the reaction UDP-N-acetyl-alpha-D-muramoyl-L-alanyl-gamma-D-glutamyl-L-lysyl-D-alanyl-D-alanine + di-trans,octa-cis-undecaprenyl phosphate = Mur2Ac(oyl-L-Ala-gamma-D-Glu-L-Lys-D-Ala-D-Ala)-di-trans,octa-cis-undecaprenyl diphosphate + UMP. The protein operates within cell wall biogenesis; peptidoglycan biosynthesis. Functionally, catalyzes the initial step of the lipid cycle reactions in the biosynthesis of the cell wall peptidoglycan: transfers peptidoglycan precursor phospho-MurNAc-pentapeptide from UDP-MurNAc-pentapeptide onto the lipid carrier undecaprenyl phosphate, yielding undecaprenyl-pyrophosphoryl-MurNAc-pentapeptide, known as lipid I. The protein is Phospho-N-acetylmuramoyl-pentapeptide-transferase of Lactobacillus helveticus (strain DPC 4571).